The sequence spans 1378 residues: DNA-directed RNA polymerase subunit beta (1378 aa).

It belongs to the RNA polymerase beta chain family. As to quaternary structure, the RNAP catalytic core consists of 2 alpha, 1 beta, 1 beta' and 1 omega subunit. When a sigma factor is associated with the core the holoenzyme is formed, which can initiate transcription.

It carries out the reaction RNA(n) + a ribonucleoside 5'-triphosphate = RNA(n+1) + diphosphate. DNA-dependent RNA polymerase catalyzes the transcription of DNA into RNA using the four ribonucleoside triphosphates as substrates. This is DNA-directed RNA polymerase subunit beta from Ruegeria pomeroyi (strain ATCC 700808 / DSM 15171 / DSS-3) (Silicibacter pomeroyi).